The following is a 115-amino-acid chain: Large ribosomal subunit protein bL19 (115 aa).

The protein belongs to the bacterial ribosomal protein bL19 family.

In terms of biological role, this protein is located at the 30S-50S ribosomal subunit interface and may play a role in the structure and function of the aminoacyl-tRNA binding site. The chain is Large ribosomal subunit protein bL19 from Leifsonia xyli subsp. xyli (strain CTCB07).